The following is a 358-amino-acid chain: Peptide chain release factor 1 (358 aa).

Gln-233 carries the post-translational modification N5-methylglutamine. The interval 286 to 309 is disordered; that stretch reads AELASARKSQVGTGDRSERIRTYN.

The protein belongs to the prokaryotic/mitochondrial release factor family. Methylated by PrmC. Methylation increases the termination efficiency of RF1.

The protein resides in the cytoplasm. Its function is as follows. Peptide chain release factor 1 directs the termination of translation in response to the peptide chain termination codons UAG and UAA. The protein is Peptide chain release factor 1 of Carboxydothermus hydrogenoformans (strain ATCC BAA-161 / DSM 6008 / Z-2901).